The chain runs to 318 residues: Pantothenate kinase (318 aa).

Residue 96 to 103 participates in ATP binding; sequence GSVAVGKS.

This sequence belongs to the prokaryotic pantothenate kinase family.

The protein localises to the cytoplasm. The enzyme catalyses (R)-pantothenate + ATP = (R)-4'-phosphopantothenate + ADP + H(+). It functions in the pathway cofactor biosynthesis; coenzyme A biosynthesis; CoA from (R)-pantothenate: step 1/5. This is Pantothenate kinase from Afipia carboxidovorans (strain ATCC 49405 / DSM 1227 / KCTC 32145 / OM5) (Oligotropha carboxidovorans).